The following is a 133-amino-acid chain: Salmonella pathogenicity island 2 protein C (133 aa).

As to quaternary structure, interacts with the mammalian NIPSNAP3A and HOOK3 proteins in infected cells.

Its subcellular location is the secreted. It localises to the cytoplasm. Functionally, virulence protein that plays a central role in mammalian macrophage infection, by inhibiting phagosome-lysosome fusion and cellular trafficking, including trafficking of organelles that are devoid of Salmonella. May act by disrupting the function of the mammalian HOOK3 protein, a protein involved in the cellular traffic. Also required for actin ADP-ribosylase SpvB activity. The polypeptide is Salmonella pathogenicity island 2 protein C (spiC) (Salmonella typhimurium (strain 14028s / SGSC 2262)).